Here is a 1178-residue protein sequence, read N- to C-terminus: Phytochrome B (1178 aa).

The segment covering 1–15 (MASGSRATPTRSPSS) has biased composition (polar residues). Positions 1–58 (MASGSRATPTRSPSSARPEAPRHAHHHHHHHSQSSGGSTSRAGGGGGGGGGGGGTAAT) are disordered. Positions 23-32 (HAHHHHHHHS) are enriched in basic residues. Residues 42-55 (AGGGGGGGGGGGGT) show a composition bias toward gly residues. A GAF domain is found at 267-449 (DIKLLCDTVV…AFGLQLNMEL (183 aa)). Residue cysteine 372 coordinates phytochromobilin. PAS domains lie at 668–739 (VARE…LRGE) and 802–873 (DYKA…MVVI). Residues 950-1170 (YICQEIKNPL…LIVLELPQPR (221 aa)) enclose the Histidine kinase domain.

Belongs to the phytochrome family. Homodimer. Post-translationally, contains one covalently linked phytochromobilin chromophore.

In terms of biological role, regulatory photoreceptor which exists in two forms that are reversibly interconvertible by light: the Pr form that absorbs maximally in the red region of the spectrum and the Pfr form that absorbs maximally in the far-red region. Photoconversion of Pr to Pfr induces an array of morphogenic responses, whereas reconversion of Pfr to Pr cancels the induction of those responses. Pfr controls the expression of a number of nuclear genes including those encoding the small subunit of ribulose-bisphosphate carboxylase, chlorophyll A/B binding protein, protochlorophyllide reductase, rRNA, etc. It also controls the expression of its own gene(s) in a negative feedback fashion. This Sorghum bicolor (Sorghum) protein is Phytochrome B (PHYB).